We begin with the raw amino-acid sequence, 123 residues long: Holo-[acyl-carrier-protein] synthase (123 aa).

Mg(2+)-binding residues include Asp8 and Glu56.

This sequence belongs to the P-Pant transferase superfamily. AcpS family. It depends on Mg(2+) as a cofactor.

The protein resides in the cytoplasm. It carries out the reaction apo-[ACP] + CoA = holo-[ACP] + adenosine 3',5'-bisphosphate + H(+). In terms of biological role, transfers the 4'-phosphopantetheine moiety from coenzyme A to a Ser of acyl-carrier-protein. The chain is Holo-[acyl-carrier-protein] synthase from Treponema denticola (strain ATCC 35405 / DSM 14222 / CIP 103919 / JCM 8153 / KCTC 15104).